The following is a 75-amino-acid chain: UPF0291 protein lin1342 (75 aa).

Residues 55 to 75 are disordered; it reads IDPKGNDVTPHKIKQMRKNKK. Residues 65–75 are compositionally biased toward basic residues; sequence HKIKQMRKNKK.

This sequence belongs to the UPF0291 family.

It localises to the cytoplasm. The chain is UPF0291 protein lin1342 from Listeria innocua serovar 6a (strain ATCC BAA-680 / CLIP 11262).